A 168-amino-acid chain; its full sequence is Mediator of RNA polymerase II transcription subunit 7b (168 aa).

Over residues M1–Y12 the composition is skewed to pro residues. Residues M1–I33 form a disordered region. Coiled-coil stretches lie at residues K64–L92 and I132–F162.

It belongs to the Mediator complex subunit 7 family. As to quaternary structure, component of the Mediator complex. Interacts with MEE14/CBP1.

It is found in the nucleus. Component of the Mediator complex, a coactivator involved in the regulated transcription of nearly all RNA polymerase II-dependent genes. Mediator functions as a bridge to convey information from gene-specific regulatory proteins to the basal RNA polymerase II transcription machinery. The Mediator complex, having a compact conformation in its free form, is recruited to promoters by direct interactions with regulatory proteins and serves for the assembly of a functional pre-initiation complex with RNA polymerase II and the general transcription factors. This is Mediator of RNA polymerase II transcription subunit 7b (MED7B) from Arabidopsis thaliana (Mouse-ear cress).